The following is a 311-amino-acid chain: Dehydrogenase/reductase SDR family member 7C (311 aa).

Positions 1 to 18 (MGIMAVLMLPLLLLGVSG) are cleaved as a signal peptide. Positions 47, 49, 191, 195, and 226 each coordinate NAD(+). The active-site Proton acceptor is Tyr191.

The protein belongs to the short-chain dehydrogenases/reductases (SDR) family. In terms of tissue distribution, expressed in skeletal muscle, cardiac muscle and skin.

It is found in the sarcoplasmic reticulum membrane. It carries out the reaction all-trans-retinol + NAD(+) = all-trans-retinal + NADH + H(+). In terms of biological role, NADH-dependent oxidoreductase which catalyzes the oxidation of all-trans-retinol to all-trans-retinal. Plays a role in the regulation of cardiac and skeletal muscle metabolic functions. Maintains Ca(2+) intracellular homeostasis by repressing Ca(2+) release from the sarcoplasmic reticulum (SR) in myotubes, possibly through local alternations in NAD/NADH or retinol/retinal. Also plays a role in Ca(2+) homeostasis by controlling Ca(2+) overload in the cytosol and the SR in myotubes. Involved in glucose uptake into skeletal muscles and muscle performance by activating PI3K and mTORC2-mediated AKT1 phosphorylation signaling pathways, possibly through the action of its downstream catalytic product all-trans-retinoic acid. This is Dehydrogenase/reductase SDR family member 7C from Rattus norvegicus (Rat).